Consider the following 497-residue polypeptide: Cobyric acid synthase (497 aa).

Residues 250–445 (EVTIAVIRLP…LHGIFNNGPW (196 aa)) enclose the GATase cobBQ-type domain. The active-site Nucleophile is cysteine 331. Histidine 437 is a catalytic residue.

This sequence belongs to the CobB/CobQ family. CobQ subfamily.

It participates in cofactor biosynthesis; adenosylcobalamin biosynthesis. In terms of biological role, catalyzes amidations at positions B, D, E, and G on adenosylcobyrinic A,C-diamide. NH(2) groups are provided by glutamine, and one molecule of ATP is hydrogenolyzed for each amidation. The sequence is that of Cobyric acid synthase from Acaryochloris marina (strain MBIC 11017).